The following is a 143-amino-acid chain: Large-conductance mechanosensitive channel (143 aa).

Helical transmembrane passes span 10-30 (FAVK…GAFS) and 89-109 (GSFI…FLMV).

Belongs to the MscL family. Homopentamer.

The protein localises to the cell inner membrane. Channel that opens in response to stretch forces in the membrane lipid bilayer. May participate in the regulation of osmotic pressure changes within the cell. This chain is Large-conductance mechanosensitive channel, found in Burkholderia cenocepacia (strain HI2424).